The primary structure comprises 299 residues: Probable lipid kinase YegS (299 aa).

In terms of domain architecture, DAGKc spans 2 to 133; sequence ANFPASLLIL…IDMARVNDKT (132 aa). Residues Thr-40, 66–72, and Thr-95 each bind ATP; that span reads GDGTINE. Mg(2+)-binding residues include Leu-215, Asp-218, and Leu-220. Glu-271 serves as the catalytic Proton acceptor.

It belongs to the diacylglycerol/lipid kinase family. YegS lipid kinase subfamily. Mg(2+) is required as a cofactor. It depends on Ca(2+) as a cofactor.

The protein resides in the cytoplasm. In terms of biological role, probably phosphorylates lipids; the in vivo substrate is unknown. This Salmonella gallinarum (strain 287/91 / NCTC 13346) protein is Probable lipid kinase YegS.